Consider the following 58-residue polypeptide: 6.8 kDa protein (58 aa).

The chain is 6.8 kDa protein from Satellite tobacco mosaic virus (STMV).